The following is a 413-amino-acid chain: Na(+)-translocating NADH-quinone reductase subunit B (413 aa).

The next 3 membrane-spanning stretches (helical) occupy residues 56–76 (MMILVWFAVFPAMFWGMYNVG), 123–143 (LLGAAYFLPIYAVVFLVGGFW), and 169–189 (IVPPTLPLWQAALGISFGVVI). Threonine 236 is subject to FMN phosphoryl threonine. Transmembrane regions (helical) follow at residues 270-290 (GSIGEVSTLMILIGGAIIIFG), 297-317 (IVAGVMIGMIATAYLFNWIGS), 322-342 (LFAMPWYWHLVLGGFAFGMIF), 358-378 (WWYGGLIGVMCILIRVANPAY), and 381-401 (GMMLAILFANLFAPLFDYVVV).

The protein belongs to the NqrB/RnfD family. As to quaternary structure, composed of six subunits; NqrA, NqrB, NqrC, NqrD, NqrE and NqrF. Requires FMN as cofactor.

It localises to the cell inner membrane. The catalysed reaction is a ubiquinone + n Na(+)(in) + NADH + H(+) = a ubiquinol + n Na(+)(out) + NAD(+). NQR complex catalyzes the reduction of ubiquinone-1 to ubiquinol by two successive reactions, coupled with the transport of Na(+) ions from the cytoplasm to the periplasm. NqrA to NqrE are probably involved in the second step, the conversion of ubisemiquinone to ubiquinol. The polypeptide is Na(+)-translocating NADH-quinone reductase subunit B (Yersinia pestis).